The primary structure comprises 253 residues: Probable transcriptional regulatory protein A1G_04400 (253 aa).

Residues 1 to 21 form a disordered region; it reads MAGHSKFKNIQHRKGAQDKKR.

This sequence belongs to the TACO1 family.

It is found in the cytoplasm. In Rickettsia rickettsii (strain Sheila Smith), this protein is Probable transcriptional regulatory protein A1G_04400.